The chain runs to 574 residues: Peptidyl-prolyl cis-trans isomerase FKBP9 (574 aa).

The first 26 residues, 1–26 (MAIRARSWRPPPPPLLLLLLWVTGQA), serve as a signal peptide directing secretion. PPIase FKBP-type domains follow at residues 58–146 (GDFV…MDIW), 170–258 (SDFV…LDLH), 282–369 (GDFL…IDFH), and 393–481 (GDYL…LELV). N-linked (GlcNAc...) asparagine glycans are attached at residues Asn-178, Asn-290, Asn-306, and Asn-401. EF-hand domains follow at residues 492-527 (WNGE…QVAS) and 537-572 (DAEM…TKHD). Ca(2+)-binding residues include Asp-505, Asp-507, Asp-509, Glu-511, Glu-516, Asp-550, Asn-552, Asp-554, Lys-556, and Glu-561. The Prevents secretion from ER motif lies at 571–574 (HDEL).

Post-translationally, phosphorylated.

The protein resides in the endoplasmic reticulum. It catalyses the reaction [protein]-peptidylproline (omega=180) = [protein]-peptidylproline (omega=0). Its activity is regulated as follows. Inhibited by FK506. In terms of biological role, PPIases accelerate the folding of proteins during protein synthesis. This is Peptidyl-prolyl cis-trans isomerase FKBP9 (FKBP9) from Bos taurus (Bovine).